The following is a 167-amino-acid chain: Large ribosomal subunit protein uL10 (167 aa).

The protein belongs to the universal ribosomal protein uL10 family. As to quaternary structure, part of the ribosomal stalk of the 50S ribosomal subunit. The N-terminus interacts with L11 and the large rRNA to form the base of the stalk. The C-terminus forms an elongated spine to which L12 dimers bind in a sequential fashion forming a multimeric L10(L12)X complex.

Forms part of the ribosomal stalk, playing a central role in the interaction of the ribosome with GTP-bound translation factors. The sequence is that of Large ribosomal subunit protein uL10 from Ligilactobacillus salivarius (strain UCC118) (Lactobacillus salivarius).